Here is a 313-residue protein sequence, read N- to C-terminus: B3 domain-containing protein At2g31720 (313 aa).

The segment at 80–110 (KNQDPEQNPNRVASSPSSCHLESKRPQKVVS) is disordered. Positions 84–99 (PEQNPNRVASSPSSCH) are enriched in polar residues. The segment at residues 169 to 267 (WKQILDMDFL…MLFFAFVLSD (99 aa)) is a DNA-binding region (TF-B3).

The protein localises to the nucleus. In Arabidopsis thaliana (Mouse-ear cress), this protein is B3 domain-containing protein At2g31720 (ARF70).